The primary structure comprises 1457 residues: Bridge-like lipid transfer protein family member 3B (1457 aa).

The region spanning 3–94 is the Chorein N-terminal domain; it reads GIIKKQILKH…DKVIMEMSTC (92 aa). 2 disordered regions span residues 267-295 and 409-449; these read STEQRKSMAPEPTQSSTVTSSAQHVKTPQ and DRNL…PQPS. The segment covering 278–295 has biased composition (polar residues); it reads PTQSSTVTSSAQHVKTPQ. Phosphoserine is present on residues S414, S418, S774, and S934. 3 disordered regions span residues 975 to 1038, 1056 to 1099, and 1145 to 1183; these read SEDE…TGKG, ASLS…LSVS, and SNTSCQSPAESVNTSANTQTCGEASPEAVSTNSEGTQEN. The segment covering 980–995 has biased composition (polar residues); the sequence is SGLSHKSGSGEMTSEG. A Phosphoserine modification is found at S1008. A compositionally biased stretch (polar residues) spans 1145–1180; it reads SNTSCQSPAESVNTSANTQTCGEASPEAVSTNSEGT. Positions 1410 to 1455 form a coiled coil; sequence ANFLDITREQLMEENECLRQRLAQAKMELAEAHSARDELLHQMKRM.

As to quaternary structure, homodimer (via N-terminus). Associates with the Golgi-associated retrograde protein (GARP) complex. Interacts with GARP complex component VPS52. Interacts (via C-terminal coiled-coil domain) with STX6.

The protein resides in the cytoplasm. It is found in the cytosol. It localises to the early endosome. In terms of biological role, tube-forming lipid transport protein which mediates the transfer of lipids between membranes at organelle contact sites. Required for retrograde traffic of vesicle clusters in the early endocytic pathway to the Golgi complex. The protein is Bridge-like lipid transfer protein family member 3B (Bltp3b) of Mus musculus (Mouse).